The sequence spans 517 residues: Endoglycoceramidase (517 aa).

A signal peptide spans 1–17 (MISVALIILFLAKVISG). Asparagine 99 carries N-linked (GlcNAc...) asparagine glycosylation. Catalysis depends on glutamate 230, which acts as the Proton donor. N-linked (GlcNAc...) asparagine glycans are attached at residues asparagine 298, asparagine 380, and asparagine 393.

Belongs to the glycosyl hydrolase 5 (cellulase A) family. As to expression, expressed uniformly in digestive cells, tentacles and peduncle regions suggesting expression in the endoderm throughout the whole body (at protein level).

The protein localises to the secreted. The catalysed reaction is an oligoglycosyl-(1-&gt;4)-beta-D-glucosyl-(1&lt;-&gt;1)-ceramide + H2O = an oligoglycosyl-(1-&gt;4)-D-glucose + an N-acyl-sphingoid base. Cu(2+), zinc, manganese, calcium, magnesium and EDTA have no significant effects on enzyme activity. Enzyme requires presence of detergents such as Triton X-100 and Lubrol PX for the hydrolysis of glycosphingolipids. Taurodeoxycholate strongly inhibits the enzyme activity. Its function is as follows. Hydrolysis of the glycosidic linkage between oligosaccharides and ceramides of glycosphingolipids, optimal substrates appear to be the glycosphingolipids with a gangliotetraose structure. The polypeptide is Endoglycoceramidase (Hydra vulgaris (Hydra)).